Here is a 210-residue protein sequence, read N- to C-terminus: T-cell surface glycoprotein CD8 beta chain (210 aa).

The signal sequence occupies residues M1 to V21. The 111-residue stretch at L22 to L132 folds into the Ig-like V-type domain. The Extracellular segment spans residues L22–P170. The cysteines at positions 41 and 116 are disulfide-linked. N102 is a glycosylation site (N-linked (GlcNAc...) asparagine). Residues I171–I191 traverse the membrane as a helical segment. Residues H192 to K210 are Cytoplasmic-facing. Y209 is modified (phosphotyrosine).

As to quaternary structure, forms disulfide-linked heterodimers with CD8A at the cell surface. Interacts with CD3D; this interaction couples TCR-CD3 with CD8. Interacts with LCK. Post-translationally, phosphorylated as a consequence of T-cell activation. Palmitoylated at the cytoplasmic tail and thereby targets the heterodimer CD8A/CD8B to lipid rafts unlike CD8A homodimers. In terms of tissue distribution, isoform 1, isoform 3, isoform 5, isoform 6, isoform 7 and isoform 8 are expressed in both thymus and peripheral CD8+ T-cells. Expression of isoform 1 is higher in thymus CD8+ T-cells than in peripheral CD8+ T-cells. Expression of isoform 6 is higher in peripheral CD8+ T-cells than in thymus CD8+ T-cells.

The protein resides in the cell membrane. Its subcellular location is the secreted. Functionally, integral membrane glycoprotein that plays an essential role in the immune response and serves multiple functions in responses against both external and internal offenses. In T-cells, functions primarily as a coreceptor for MHC class I molecule:peptide complex. The antigens presented by class I peptides are derived from cytosolic proteins while class II derived from extracellular proteins. Interacts simultaneously with the T-cell receptor (TCR) and the MHC class I proteins presented by antigen presenting cells (APCs). In turn, recruits the Src kinase LCK to the vicinity of the TCR-CD3 complex. A palmitoylation site in the cytoplasmic tail of CD8B chain contributes to partitioning of CD8 into the plasma membrane lipid rafts where signaling proteins are enriched. Once LCK recruited, it initiates different intracellular signaling pathways by phosphorylating various substrates ultimately leading to lymphokine production, motility, adhesion and activation of cytotoxic T-lymphocytes (CTLs). Additionally, plays a critical role in thymic selection of CD8+ T-cells. The protein is T-cell surface glycoprotein CD8 beta chain (CD8B) of Homo sapiens (Human).